The primary structure comprises 705 residues: Elongation factor G (705 aa).

The region spanning 8–290 (EKYRNIGICA…GVVEYLPAPN (283 aa)) is the tr-type G domain. GTP is bound by residues 17-24 (AHVDAGKT), 88-92 (DTPGH), and 142-145 (NKMD).

It belongs to the TRAFAC class translation factor GTPase superfamily. Classic translation factor GTPase family. EF-G/EF-2 subfamily.

It is found in the cytoplasm. In terms of biological role, catalyzes the GTP-dependent ribosomal translocation step during translation elongation. During this step, the ribosome changes from the pre-translocational (PRE) to the post-translocational (POST) state as the newly formed A-site-bound peptidyl-tRNA and P-site-bound deacylated tRNA move to the P and E sites, respectively. Catalyzes the coordinated movement of the two tRNA molecules, the mRNA and conformational changes in the ribosome. In Francisella philomiragia subsp. philomiragia (strain ATCC 25017 / CCUG 19701 / FSC 153 / O#319-036), this protein is Elongation factor G.